Consider the following 282-residue polypeptide: 1D-myo-inositol 2-acetamido-2-deoxy-alpha-D-glucopyranoside deacetylase (282 aa).

The Zn(2+) site is built by H6, D9, and H141.

It belongs to the MshB deacetylase family. The cofactor is Zn(2+).

It carries out the reaction 1D-myo-inositol 2-acetamido-2-deoxy-alpha-D-glucopyranoside + H2O = 1D-myo-inositol 2-amino-2-deoxy-alpha-D-glucopyranoside + acetate. Catalyzes the deacetylation of 1D-myo-inositol 2-acetamido-2-deoxy-alpha-D-glucopyranoside (GlcNAc-Ins) in the mycothiol biosynthesis pathway. The sequence is that of 1D-myo-inositol 2-acetamido-2-deoxy-alpha-D-glucopyranoside deacetylase from Nocardiopsis dassonvillei (strain ATCC 23218 / DSM 43111 / CIP 107115 / JCM 7437 / KCTC 9190 / NBRC 14626 / NCTC 10488 / NRRL B-5397 / IMRU 509) (Actinomadura dassonvillei).